The following is a 370-amino-acid chain: Serine/threonine-protein kinase RIM11/MSD1 (370 aa).

Positions 39-322 (FPTTEVVGHG…ALQCLCSPYF (284 aa)) constitute a Protein kinase domain. ATP is bound by residues 45 to 53 (VGHGSFGVV) and Lys-68. The Proton acceptor role is filled by Asp-164. Residue Tyr-199 is modified to Phosphotyrosine.

The protein belongs to the protein kinase superfamily. CMGC Ser/Thr protein kinase family. GSK-3 subfamily. In terms of assembly, interacts with TDA1.

The enzyme catalyses L-seryl-[protein] + ATP = O-phospho-L-seryl-[protein] + ADP + H(+). It carries out the reaction L-threonyl-[protein] + ATP = O-phospho-L-threonyl-[protein] + ADP + H(+). In terms of biological role, serine/threonine protein kinase that is thought to function in regulating kinetochore activity and entry into meiosis. Could phosphorylate IME1. This is Serine/threonine-protein kinase RIM11/MSD1 (RIM11) from Saccharomyces cerevisiae (strain ATCC 204508 / S288c) (Baker's yeast).